Consider the following 181-residue polypeptide: Probable cobalt-precorrin-6B C(15)-methyltransferase (decarboxylating) (181 aa).

Residues T16, 40 to 44 (GCGSG), D61, and A89 each bind S-adenosyl-L-methionine.

It belongs to the methyltransferase superfamily. Archaeal-type CbiT family.

The enzyme catalyses Co-precorrin-6B + S-adenosyl-L-methionine = Co-precorrin-7 + S-adenosyl-L-homocysteine + CO2. It participates in cofactor biosynthesis; adenosylcobalamin biosynthesis; cob(II)yrinate a,c-diamide from sirohydrochlorin (anaerobic route): step 8/10. Catalyzes the methylation of C-15 in cobalt-precorrin-6B followed by the decarboxylation of C-12 to form cobalt-precorrin-7. The chain is Probable cobalt-precorrin-6B C(15)-methyltransferase (decarboxylating) from Methanococcus maripaludis (strain C5 / ATCC BAA-1333).